Reading from the N-terminus, the 190-residue chain is Elongation factor P-like protein (190 aa).

It belongs to the elongation factor P family.

The polypeptide is Elongation factor P-like protein (Photorhabdus laumondii subsp. laumondii (strain DSM 15139 / CIP 105565 / TT01) (Photorhabdus luminescens subsp. laumondii)).